Consider the following 395-residue polypeptide: MAKETFDRSKPHVNIGTIGHVDHGKTTLTAAITTVLANKGLAAKRDFSSIDNAPEEKERGITINTAHVEYSTANRHYAHVDCPGHADYVKNMVTGAAQMDGAILVVAATDGPMPQTREHILLARQVGVPQLVVFMNKVDMVDDPELLELVEMEIRELLSFYDFDGDNIPVVQGSALGGLNGDAKWVGTIEQLMDSVDNWIPIPPRLTDQPFLMPVEDVFSITGRGTVATGRIERGVINSGEPVEILGMGAENLKSTVTGVEMFRKILDRGEAGDNVGLLLRGIEKEAIRRGMVICKPGSVTPHKKFKAEVYVLSKEEGGRHTPFFNNYRPQFYFRTTDVTGIISLAEGVEMVMPGDNVTISVELINAVAMEKGLRFAIREGGRTVGAGQVTEILD.

Residues 10–205 (KPHVNIGTIG…VDNWIPIPPR (196 aa)) enclose the tr-type G domain. The interval 19-26 (GHVDHGKT) is G1. Residue 19 to 26 (GHVDHGKT) participates in GTP binding. Residue T26 participates in Mg(2+) binding. The G2 stretch occupies residues 60–64 (GITIN). The tract at residues 81 to 84 (DCPG) is G3. GTP is bound by residues 81-85 (DCPGH) and 136-139 (NKVD). The G4 stretch occupies residues 136-139 (NKVD). The interval 174–176 (SAL) is G5.

The protein belongs to the TRAFAC class translation factor GTPase superfamily. Classic translation factor GTPase family. EF-Tu/EF-1A subfamily. In terms of assembly, monomer.

It is found in the cytoplasm. It catalyses the reaction GTP + H2O = GDP + phosphate + H(+). Its function is as follows. GTP hydrolase that promotes the GTP-dependent binding of aminoacyl-tRNA to the A-site of ribosomes during protein biosynthesis. This Hymenobacter ocellatus (Parahymenobacter ocellatus) protein is Elongation factor Tu.